The sequence spans 264 residues: S-adenosylmethionine decarboxylase proenzyme (264 aa).

Residue S113 is the Schiff-base intermediate with substrate; via pyruvic acid of the active site. A Pyruvic acid (Ser); by autocatalysis modification is found at S113. The active-site Proton acceptor; for processing activity is H118. C141 functions as the Proton donor; for catalytic activity in the catalytic mechanism.

This sequence belongs to the prokaryotic AdoMetDC family. Type 2 subfamily. Heterooctamer of four alpha and four beta chains arranged as a tetramer of alpha/beta heterodimers. Pyruvate serves as cofactor. Post-translationally, is synthesized initially as an inactive proenzyme. Formation of the active enzyme involves a self-maturation process in which the active site pyruvoyl group is generated from an internal serine residue via an autocatalytic post-translational modification. Two non-identical subunits are generated from the proenzyme in this reaction, and the pyruvate is formed at the N-terminus of the alpha chain, which is derived from the carboxyl end of the proenzyme. The post-translation cleavage follows an unusual pathway, termed non-hydrolytic serinolysis, in which the side chain hydroxyl group of the serine supplies its oxygen atom to form the C-terminus of the beta chain, while the remainder of the serine residue undergoes an oxidative deamination to produce ammonia and the pyruvoyl group blocking the N-terminus of the alpha chain.

The enzyme catalyses S-adenosyl-L-methionine + H(+) = S-adenosyl 3-(methylsulfanyl)propylamine + CO2. It participates in amine and polyamine biosynthesis; S-adenosylmethioninamine biosynthesis; S-adenosylmethioninamine from S-adenosyl-L-methionine: step 1/1. In terms of biological role, catalyzes the decarboxylation of S-adenosylmethionine to S-adenosylmethioninamine (dcAdoMet), the propylamine donor required for the synthesis of the polyamines spermine and spermidine from the diamine putrescine. This chain is S-adenosylmethionine decarboxylase proenzyme, found in Xylella fastidiosa (strain 9a5c).